The sequence spans 188 residues: Acyl-acyl carrier protein thioesterase ATL2, chloroplastic (188 aa).

Residues 1–47 (MFQATSTGAQIMHAAFPRSWRRGHVLPLRSAKIFKPLACLELRGSTG) constitute a chloroplast transit peptide. Asp-64 is a catalytic residue.

This sequence belongs to the 4-hydroxybenzoyl-CoA thioesterase family. Expressed in endodermal and peridermal cells in young and mature roots, in boundaries of stem lateral organs and developing seeds.

The protein localises to the plastid. It is found in the chloroplast. Its function is as follows. Acyl-ACP thioesterase involved in the production of fatty acids and beta-keto fatty acids. Can produce beta-keto fatty acids of medium chain (8:0 and 10:0) and small amounts of 8:0 fatty acid when expressed in a heterologous organism (E.coli). May play a role in suberin biosynthesis. The polypeptide is Acyl-acyl carrier protein thioesterase ATL2, chloroplastic (Arabidopsis thaliana (Mouse-ear cress)).